The chain runs to 122 residues: Large ribosomal subunit protein bL12 (122 aa).

The protein belongs to the bacterial ribosomal protein bL12 family. As to quaternary structure, homodimer. Part of the ribosomal stalk of the 50S ribosomal subunit. Forms a multimeric L10(L12)X complex, where L10 forms an elongated spine to which 2 to 4 L12 dimers bind in a sequential fashion. Binds GTP-bound translation factors.

In terms of biological role, forms part of the ribosomal stalk which helps the ribosome interact with GTP-bound translation factors. Is thus essential for accurate translation. The polypeptide is Large ribosomal subunit protein bL12 (Buchnera aphidicola subsp. Schizaphis graminum (strain Sg)).